The primary structure comprises 716 residues: 1,4-alpha-glucan branching enzyme GlgB (716 aa).

Asp399 (nucleophile) is an active-site residue. The Proton donor role is filled by Glu452.

Belongs to the glycosyl hydrolase 13 family. GlgB subfamily. Monomer.

The catalysed reaction is Transfers a segment of a (1-&gt;4)-alpha-D-glucan chain to a primary hydroxy group in a similar glucan chain.. It functions in the pathway glycan biosynthesis; glycogen biosynthesis. In terms of biological role, catalyzes the formation of the alpha-1,6-glucosidic linkages in glycogen by scission of a 1,4-alpha-linked oligosaccharide from growing alpha-1,4-glucan chains and the subsequent attachment of the oligosaccharide to the alpha-1,6 position. This is 1,4-alpha-glucan branching enzyme GlgB from Rhodopseudomonas palustris (strain HaA2).